The chain runs to 568 residues: CTP synthase (568 aa).

Residues 1–276 form an amidoligase domain region; sequence MPQARTIKHV…DAYLVRRLGL (276 aa). Ser-18 contributes to the CTP binding site. A UTP-binding site is contributed by Ser-18. ATP contacts are provided by residues 19–24 and Asp-76; that span reads SLGKGL. Mg(2+) is bound by residues Asp-76 and Glu-150. CTP is bound by residues 157-159, 197-202, and Lys-233; these read DIE and KTKPTQ. UTP contacts are provided by residues 197 to 202 and Lys-233; that span reads KTKPTQ. Positions 301 to 550 constitute a Glutamine amidotransferase type-1 domain; that stretch reads RIALVGKYVD…VNAALEYRAA (250 aa). Residue Gly-364 coordinates L-glutamine. Cys-391 functions as the Nucleophile; for glutamine hydrolysis in the catalytic mechanism. L-glutamine-binding positions include 392 to 395, Glu-415, and Arg-476; that span reads LGLQ. Active-site residues include His-523 and Glu-525.

It belongs to the CTP synthase family. Homotetramer.

It catalyses the reaction UTP + L-glutamine + ATP + H2O = CTP + L-glutamate + ADP + phosphate + 2 H(+). The enzyme catalyses L-glutamine + H2O = L-glutamate + NH4(+). It carries out the reaction UTP + NH4(+) + ATP = CTP + ADP + phosphate + 2 H(+). It participates in pyrimidine metabolism; CTP biosynthesis via de novo pathway; CTP from UDP: step 2/2. With respect to regulation, allosterically activated by GTP, when glutamine is the substrate; GTP has no effect on the reaction when ammonia is the substrate. The allosteric effector GTP functions by stabilizing the protein conformation that binds the tetrahedral intermediate(s) formed during glutamine hydrolysis. Inhibited by the product CTP, via allosteric rather than competitive inhibition. Functionally, catalyzes the ATP-dependent amination of UTP to CTP with either L-glutamine or ammonia as the source of nitrogen. Regulates intracellular CTP levels through interactions with the four ribonucleotide triphosphates. The sequence is that of CTP synthase from Saccharopolyspora erythraea (strain ATCC 11635 / DSM 40517 / JCM 4748 / NBRC 13426 / NCIMB 8594 / NRRL 2338).